Here is a 310-residue protein sequence, read N- to C-terminus: Nodulation protein D 1 (310 aa).

The HTH lysR-type domain occupies 6-63 (LDLNLLVALDALMTERQLTAAARRINLSQPAMSAAIARLRNYFHDDLFVMQGRELILT). Positions 23–42 (LTAAARRINLSQPAMSAAIA) form a DNA-binding region, H-T-H motif.

It belongs to the LysR transcriptional regulatory family.

In terms of biological role, nodD regulates the expression of the nodABCFE genes which encode other nodulation proteins. NodD is also a negative regulator of its own expression. Binds flavonoids as inducers. This Neorhizobium galegae (Rhizobium galegae) protein is Nodulation protein D 1 (nodD1).